Here is a 429-residue protein sequence, read N- to C-terminus: Argininosuccinate lyase (429 aa).

This sequence belongs to the lyase 1 family. Argininosuccinate lyase subfamily.

It is found in the cytoplasm. It catalyses the reaction 2-(N(omega)-L-arginino)succinate = fumarate + L-arginine. The protein operates within amino-acid biosynthesis; L-arginine biosynthesis; L-arginine from L-ornithine and carbamoyl phosphate: step 3/3. This is Argininosuccinate lyase from Pyrobaculum islandicum (strain DSM 4184 / JCM 9189 / GEO3).